Consider the following 860-residue polypeptide: Valine--tRNA ligase (860 aa).

Residues 53–63 carry the 'HIGH' region motif; that stretch reads PNLTGILHIGH. The short motif at 527 to 531 is the 'KMSKS' region element; that stretch reads KMSKS. Lys530 lines the ATP pocket. A coiled-coil region spans residues 794-860; it reads QDKTKIVDKL…LKQDKLNSLK (67 aa).

It belongs to the class-I aminoacyl-tRNA synthetase family. ValS type 1 subfamily. In terms of assembly, monomer.

The protein resides in the cytoplasm. It catalyses the reaction tRNA(Val) + L-valine + ATP = L-valyl-tRNA(Val) + AMP + diphosphate. Functionally, catalyzes the attachment of valine to tRNA(Val). As ValRS can inadvertently accommodate and process structurally similar amino acids such as threonine, to avoid such errors, it has a 'posttransfer' editing activity that hydrolyzes mischarged Thr-tRNA(Val) in a tRNA-dependent manner. This is Valine--tRNA ligase from Mycoplasmoides gallisepticum (strain R(low / passage 15 / clone 2)) (Mycoplasma gallisepticum).